The following is a 504-amino-acid chain: D-alanine--D-alanyl carrier protein ligase (504 aa).

152-153 (TS) provides a ligand contact to ATP. D197 serves as a coordination point for D-alanine. 292-297 (NTYGPT) contacts ATP. Residue V301 participates in D-alanine binding. ATP is bound by residues D383, 394 to 397 (YNGR), and K492. K492 contacts D-alanine.

The protein belongs to the ATP-dependent AMP-binding enzyme family. DltA subfamily.

The protein localises to the cytoplasm. It catalyses the reaction holo-[D-alanyl-carrier protein] + D-alanine + ATP = D-alanyl-[D-alanyl-carrier protein] + AMP + diphosphate. It functions in the pathway cell wall biogenesis; lipoteichoic acid biosynthesis. Catalyzes the first step in the D-alanylation of lipoteichoic acid (LTA), the activation of D-alanine and its transfer onto the D-alanyl carrier protein (Dcp) DltC. In an ATP-dependent two-step reaction, forms a high energy D-alanyl-AMP intermediate, followed by transfer of the D-alanyl residue as a thiol ester to the phosphopantheinyl prosthetic group of the Dcp. D-alanylation of LTA plays an important role in modulating the properties of the cell wall in Gram-positive bacteria, influencing the net charge of the cell wall. In Bacillus cereus (strain ATCC 10987 / NRS 248), this protein is D-alanine--D-alanyl carrier protein ligase.